The primary structure comprises 60 residues: Cytochrome c oxidase subunit 9, mitochondrial (60 aa).

Over 1-15 (MSAIAPITGTIRKRI) the chain is Mitochondrial matrix. The chain crosses the membrane as a helical span at residues 16–38 (LADITIGFAIGGAMASYWWWGFH). The Mitochondrial intermembrane portion of the chain corresponds to 39–57 (KNIINKREAYYAKLAEQKA). Residues 58-60 (AEN) constitute a propeptide, removed in mature form.

Belongs to the fungal cytochrome c oxidase subunit 7a family. In terms of assembly, component of the cytochrome c oxidase (complex IV, CIV), a multisubunit enzyme composed of a catalytic core of 3 subunits and several supernumerary subunits. The complex exists as a monomer or a dimer and forms supercomplexes (SCs) in the inner mitochondrial membrane with ubiquinol-cytochrome c oxidoreductase (cytochrome b-c1 complex, complex III, CIII).

The protein resides in the mitochondrion inner membrane. Its pathway is energy metabolism; oxidative phosphorylation. Functionally, component of the cytochrome c oxidase, the last enzyme in the mitochondrial electron transport chain which drives oxidative phosphorylation. The respiratory chain contains 3 multisubunit complexes succinate dehydrogenase (complex II, CII), ubiquinol-cytochrome c oxidoreductase (cytochrome b-c1 complex, complex III, CIII) and cytochrome c oxidase (complex IV, CIV), that cooperate to transfer electrons derived from NADH and succinate to molecular oxygen, creating an electrochemical gradient over the inner membrane that drives transmembrane transport and the ATP synthase. Cytochrome c oxidase is the component of the respiratory chain that catalyzes the reduction of oxygen to water. Electrons originating from reduced cytochrome c in the intermembrane space (IMS) are transferred via the dinuclear copper A center (CU(A)) of subunit 2 and heme A of subunit 1 to the active site in subunit 1, a binuclear center (BNC) formed by heme A3 and copper B (CU(B)). The BNC reduces molecular oxygen to 2 water molecules using 4 electrons from cytochrome c in the IMS and 4 protons from the mitochondrial matrix. This is Cytochrome c oxidase subunit 9, mitochondrial (COX9) from Kluyveromyces lactis (strain ATCC 8585 / CBS 2359 / DSM 70799 / NBRC 1267 / NRRL Y-1140 / WM37) (Yeast).